The following is a 604-amino-acid chain: Ectonucleoside triphosphate diphosphohydrolase 7 (604 aa).

Topologically, residues methionine 1–arginine 28 are cytoplasmic. Residues valine 29–phenylalanine 49 form a helical membrane-spanning segment. At arginine 50–serine 546 the chain is on the vesicular side. Glutamate 217 acts as the Proton acceptor in catalysis. Asparagine 330 is a glycosylation site (N-linked (GlcNAc...) asparagine). Residues cysteine 448 and cysteine 477 are joined by a disulfide bond. Residues phenylalanine 547–leucine 567 traverse the membrane as a helical segment. Residues tyrosine 568–proline 604 are Cytoplasmic-facing.

It belongs to the GDA1/CD39 NTPase family. Ca(2+) is required as a cofactor. The cofactor is Mg(2+).

The protein localises to the cytoplasmic vesicle membrane. The enzyme catalyses a ribonucleoside 5'-triphosphate + H2O = a ribonucleoside 5'-diphosphate + phosphate + H(+). It carries out the reaction UTP + H2O = UDP + phosphate + H(+). It catalyses the reaction GTP + H2O = GDP + phosphate + H(+). The catalysed reaction is CTP + H2O = CDP + phosphate + H(+). Its function is as follows. Catalyzes the hydrolysis of nucleoside triphosphates and diphosphates in a calcium- or magnesium-dependent manner. Preferentially hydrolyzes nucleoside 5'-triphosphates, with substrate preference for UTP &gt; GTP &gt; CTP. Hydrolyzes ATP and nucleoside diphosphates only to a minor extent. This is Ectonucleoside triphosphate diphosphohydrolase 7 (ENTPD7) from Pongo abelii (Sumatran orangutan).